The sequence spans 94 residues: MKTLLLTLVVVTIVCLDLGDSLICYMGPKTPRTCPRGQNLCYTKTWCDAFCSSRGKVVELGCAATCPIAKSYEDVTCCSTDNCNPFPVRPRPHP.

An N-terminal signal peptide occupies residues 1 to 21 (MKTLLLTLVVVTIVCLDLGDS). 5 cysteine pairs are disulfide-bonded: C24-C41, C34-C62, C47-C51, C66-C77, and C78-C83.

Belongs to the three-finger toxin family. Long-chain subfamily. Type II alpha-neurotoxin sub-subfamily. In terms of tissue distribution, expressed by the venom gland.

It is found in the secreted. Functionally, binds with high affinity to muscular (alpha-1/CHRNA1) and neuronal (alpha-7/CHRNA7) nicotinic acetylcholine receptor (nAChR) and inhibits acetylcholine from binding to the receptor, thereby impairing neuromuscular and neuronal transmission. The polypeptide is Alpha-elapitoxin-Nss2a (Notechis scutatus scutatus (Mainland tiger snake)).